Here is a 438-residue protein sequence, read N- to C-terminus: Methionine aminopeptidase 2 (438 aa).

The interval 1-89 (MAAQAAPAEE…LFPNKQYPKG (89 aa)) is disordered. Positions 10 to 20 (ELSKLSVEETK) are enriched in basic and acidic residues. Positions 51–65 (AKKKKKRKPRKKKKA) are enriched in basic residues. His-191 is a binding site for substrate. The a divalent metal cation site is built by Asp-211, Asp-222, and His-291. A substrate-binding site is contributed by His-299. 2 residues coordinate a divalent metal cation: Glu-324 and Glu-419.

This sequence belongs to the peptidase M24A family. Methionine aminopeptidase eukaryotic type 2 subfamily. Requires Co(2+) as cofactor. The cofactor is Zn(2+). Mn(2+) serves as cofactor. Fe(2+) is required as a cofactor.

Its subcellular location is the cytoplasm. It catalyses the reaction Release of N-terminal amino acids, preferentially methionine, from peptides and arylamides.. Cotranslationally removes the N-terminal methionine from nascent proteins. The N-terminal methionine is often cleaved when the second residue in the primary sequence is small and uncharged (Met-Ala-, Cys, Gly, Pro, Ser, Thr, or Val). In Sordaria macrospora (strain ATCC MYA-333 / DSM 997 / K(L3346) / K-hell), this protein is Methionine aminopeptidase 2.